Reading from the N-terminus, the 740-residue chain is UvrABC system protein B (740 aa).

Residues 1–36 are disordered; that stretch reads MTIAIRTTLDEPENHSDFVPHRPSRPEKTEPSKPFR. A compositionally biased stretch (basic and acidic residues) spans 8 to 33; it reads TLDEPENHSDFVPHRPSRPEKTEPSK. One can recognise a Helicase ATP-binding domain in the interval 56 to 444; that stretch reads KDIQKGERDQ…GGVFVEQIIR (389 aa). 69–76 serves as a coordination point for ATP; the sequence is GVTGSGKT. A Beta-hairpin motif is present at residues 122–145; that stretch reads YYDYYQPEAYVPRTDTYIEKDSAI. The 167-residue stretch at 461-627 folds into the Helicase C-terminal domain; it reads QVDNLIFEAK…TVKRQVDDIV (167 aa). In terms of domain architecture, UVR spans 651 to 686; sequence ARSISETEKEMLEAAANLEFEKAAQLRDVLHQLKRQ. A disordered region spans residues 687–740; that stretch reads ELGLPPEKSSEIQGRSEAGRPGTRKTRSDKAREAKASKRVKQEAGEKLLRSRGH. The segment covering 712–740 has biased composition (basic and acidic residues); sequence TRSDKAREAKASKRVKQEAGEKLLRSRGH.

The protein belongs to the UvrB family. Forms a heterotetramer with UvrA during the search for lesions. Interacts with UvrC in an incision complex.

It is found in the cytoplasm. Its function is as follows. The UvrABC repair system catalyzes the recognition and processing of DNA lesions. A damage recognition complex composed of 2 UvrA and 2 UvrB subunits scans DNA for abnormalities. Upon binding of the UvrA(2)B(2) complex to a putative damaged site, the DNA wraps around one UvrB monomer. DNA wrap is dependent on ATP binding by UvrB and probably causes local melting of the DNA helix, facilitating insertion of UvrB beta-hairpin between the DNA strands. Then UvrB probes one DNA strand for the presence of a lesion. If a lesion is found the UvrA subunits dissociate and the UvrB-DNA preincision complex is formed. This complex is subsequently bound by UvrC and the second UvrB is released. If no lesion is found, the DNA wraps around the other UvrB subunit that will check the other stand for damage. This is UvrABC system protein B from Zymomonas mobilis subsp. mobilis (strain ATCC 31821 / ZM4 / CP4).